A 290-amino-acid polypeptide reads, in one-letter code: Ubiquinone biosynthesis protein COQ4, mitochondrial (290 aa).

Residues 1 to 32 constitute a mitochondrion transit peptide; it reads MAKRVCVGDLRKLAGSVSTPSRCILPPHARCF. H168, D169, H172, and E184 together coordinate Zn(2+). Residues 260–290 form a disordered region; it reads KPPDLREMRKAEREAQKKDKEAKETMTRAAV.

It belongs to the COQ4 family. Component of a multi-subunit COQ enzyme complex, composed of at least COQ3, COQ4, COQ5, COQ6, COQ7 and COQ9. Zn(2+) is required as a cofactor.

Its subcellular location is the mitochondrion inner membrane. It catalyses the reaction a 4-hydroxy-3-methoxy-5-(all-trans-polyprenyl)benzoate + H(+) = a 2-methoxy-6-(all-trans-polyprenyl)phenol + CO2. It functions in the pathway cofactor biosynthesis; ubiquinone biosynthesis. Its function is as follows. Lyase that catalyzes the C1-decarboxylation of 4-hydroxy-3-methoxy-5-(all-trans-polyprenyl)benzoic acid into 2-methoxy-6-(all-trans-polyprenyl)phenol during ubiquinone biosynthesis. In Phaeosphaeria nodorum (strain SN15 / ATCC MYA-4574 / FGSC 10173) (Glume blotch fungus), this protein is Ubiquinone biosynthesis protein COQ4, mitochondrial.